We begin with the raw amino-acid sequence, 157 residues long: Secreted effector protein See1 (157 aa).

An N-terminal signal peptide occupies residues 1-21; sequence MLFTTFVSLLLVILCLVHVSA. Positions 124–157 are disordered; that stretch reads SYRYGDSHGNSREAEYSVADHQSASGEYKFGPTT. Residues 128–138 show a composition bias toward basic and acidic residues; sequence GDSHGNSREAE.

In terms of assembly, interacts with a maize homolog of SGT1, a factor acting in cell cycle progression in yeast Saccharomyces cerevisiae and an important component of plant and human innate immunity.

It is found in the secreted. The protein resides in the host cytoplasm. The protein localises to the host nucleus. Functionally, effector protein involved in the induction of tumors in infected plant tissues by the fungus. Required for the reactivation of plant DNA synthesis, which is crucial for tumor progression in leaf cells. Interferes with the MAPK-triggered phosphorylation of maize SGT1 at a monocot-specific phosphorylation site, resulting in both modulation of immune responses and reactivation of DNA synthesis during leaf tumor formation. This Mycosarcoma maydis (Corn smut fungus) protein is Secreted effector protein See1.